A 170-amino-acid chain; its full sequence is Large ribosomal subunit protein uL11 (170 aa).

It belongs to the universal ribosomal protein uL11 family. In terms of assembly, part of the ribosomal stalk of the 50S ribosomal subunit. Interacts with L10 and the large rRNA to form the base of the stalk. L10 forms an elongated spine to which L12 dimers bind in a sequential fashion forming a multimeric L10(L12)X complex.

Functionally, forms part of the ribosomal stalk which helps the ribosome interact with GTP-bound translation factors. This Sulfolobus acidocaldarius (strain ATCC 33909 / DSM 639 / JCM 8929 / NBRC 15157 / NCIMB 11770) protein is Large ribosomal subunit protein uL11.